A 316-amino-acid polypeptide reads, in one-letter code: Ribosomal RNA small subunit methyltransferase H (316 aa).

Residues 35–37 (SGH), Asp55, Phe84, Asp105, and Gln112 each bind S-adenosyl-L-methionine.

This sequence belongs to the methyltransferase superfamily. RsmH family.

It localises to the cytoplasm. It carries out the reaction cytidine(1402) in 16S rRNA + S-adenosyl-L-methionine = N(4)-methylcytidine(1402) in 16S rRNA + S-adenosyl-L-homocysteine + H(+). Its function is as follows. Specifically methylates the N4 position of cytidine in position 1402 (C1402) of 16S rRNA. The polypeptide is Ribosomal RNA small subunit methyltransferase H (Streptococcus pyogenes serotype M4 (strain MGAS10750)).